We begin with the raw amino-acid sequence, 658 residues long: Phosphomethylpyrimidine synthase (658 aa).

The interval 1 to 22 (MNNSTDAVNPAKKPQTRREKRE) is disordered. Substrate-binding positions include asparagine 248, methionine 277, tyrosine 306, histidine 342, 362–364 (SRG), 403–406 (DGLR), and glutamate 442. Histidine 446 is a Zn(2+) binding site. Residue tyrosine 469 participates in substrate binding. Histidine 510 serves as a coordination point for Zn(2+). Positions 590, 593, and 598 each coordinate [4Fe-4S] cluster.

The protein belongs to the ThiC family. Homodimer. It depends on [4Fe-4S] cluster as a cofactor.

It catalyses the reaction 5-amino-1-(5-phospho-beta-D-ribosyl)imidazole + S-adenosyl-L-methionine = 4-amino-2-methyl-5-(phosphooxymethyl)pyrimidine + CO + 5'-deoxyadenosine + formate + L-methionine + 3 H(+). Its pathway is cofactor biosynthesis; thiamine diphosphate biosynthesis. Its function is as follows. Catalyzes the synthesis of the hydroxymethylpyrimidine phosphate (HMP-P) moiety of thiamine from aminoimidazole ribotide (AIR) in a radical S-adenosyl-L-methionine (SAM)-dependent reaction. The sequence is that of Phosphomethylpyrimidine synthase from Colwellia psychrerythraea (strain 34H / ATCC BAA-681) (Vibrio psychroerythus).